We begin with the raw amino-acid sequence, 220 residues long: Ribosomal RNA small subunit methyltransferase G (220 aa).

Positions 78, 83, and 144 each coordinate S-adenosyl-L-methionine.

Belongs to the methyltransferase superfamily. RNA methyltransferase RsmG family.

The protein localises to the cytoplasm. The enzyme catalyses guanosine(527) in 16S rRNA + S-adenosyl-L-methionine = N(7)-methylguanosine(527) in 16S rRNA + S-adenosyl-L-homocysteine. Its function is as follows. Specifically methylates the N7 position of guanine in position 527 of 16S rRNA. In Alkalilimnicola ehrlichii (strain ATCC BAA-1101 / DSM 17681 / MLHE-1), this protein is Ribosomal RNA small subunit methyltransferase G.